A 287-amino-acid chain; its full sequence is Syntaxin-11 (287 aa).

The stretch at 41-71 (LESLYRVIQDIQDENQLLLIDVRRLGRQNVR) forms a coiled coil. A t-SNARE coiled-coil homology domain is found at 204–266 (LNEIESRHRE…GEAKAQVRKA (63 aa)).

The protein belongs to the syntaxin family. Interacts with the SNARE proteins SNAP-23 and VAMP.

It is found in the membrane. Its subcellular location is the golgi apparatus. It localises to the trans-Golgi network membrane. Its function is as follows. SNARE that acts to regulate protein transport between late endosomes and the trans-Golgi network. This is Syntaxin-11 (Stx11) from Mus musculus (Mouse).